Here is a 66-residue protein sequence, read N- to C-terminus: Small ribosomal subunit protein bS21 (66 aa).

It belongs to the bacterial ribosomal protein bS21 family.

In Rickettsia africae (strain ESF-5), this protein is Small ribosomal subunit protein bS21.